A 263-amino-acid polypeptide reads, in one-letter code: MSSSKPTIAFFGATGGSTISCLAPALKAGYRCAALARTPSRLRDLLVQRGVSESTIADNLTIVSGTATDLQPVKQTLQMGRPASDMADLIVSGIGGKLIMSNPLSPTLDNPTICQDVVRNILTAIRELRDTGTTKAPFLITLSTTGISEVKRDLPIAMMPMYHWMLKVPHDDKKVMERLIVDDAERDPAARALGGYVIVRPSLLTDGDRDKGGDLKKIRVGVEEAPAVGYTISREDVGRWVFEHLVKKGRESEYAGKAVTITY.

The protein belongs to the avfA family.

It participates in secondary metabolite biosynthesis. Functionally, reductase; part of the gene cluster that mediates the biosynthesis of pyranterreones, a family of antioxidative compounds. The first step of pyranonigrins biosynthesis is performed by the hybrid PKS-NRPS synthetase pytA that condenses 4 malonyl-CoA units ato the acetyl starter unit by the modular PKS of pytA. The acyl chain is then connected to an L-serine through the amide bond by the modular NRPS of pytA. A tetramic acid is formed and released from the PKS-NRPS pytA to give pyranterreone 5 with the help of the thioesterase pytI. Pyranterreone 5 could be methylated by pytC to afford pyranterreone 6. Both pyranterreones 5 and 6 are subsequently oxidized by the FAD-linked oxidoreductase pytB and the cytochrome P450 monooxygenase pytD to form the fused gamma-pyrone core, resulting in pyranterreones 7 and 11, respectively. The hydroxy group at C-8 of pyranterreones 7 and 11 are dehydrated by the aspartyl protease pytH to form a delta-7 double bond to give pyranterreones 3 and 1, 2 accordingly. The exo-methylene of pyranterreone 3 could be reduced into a pendant methyl by reductase pytE to provide pyranterreone 4, also known as cordylactam. Pyranterreone 4 can be reconverted to pyranterreone 3 through pytB-catalyzed dehydrogenation or further oxidized to pyranterreones 9 and 10. In Aspergillus terreus, this protein is Reductase pytE.